We begin with the raw amino-acid sequence, 246 residues long: UDP-N-acetyl-D-mannosaminuronic acid transferase (246 aa).

This sequence belongs to the glycosyltransferase 26 family.

It carries out the reaction UDP-N-acetyl-alpha-D-mannosaminouronate + N-acetyl-alpha-D-glucosaminyl-di-trans,octa-cis-undecaprenyl diphosphate = beta-D-ManNAcA-(1-&gt;4)-alpha-D-GlcNAc-di-trans,octa-cis-undecaprenyl diphosphate + UDP + H(+). It functions in the pathway bacterial outer membrane biogenesis; enterobacterial common antigen biosynthesis. In terms of biological role, catalyzes the synthesis of Und-PP-GlcNAc-ManNAcA (Lipid II), the second lipid-linked intermediate involved in enterobacterial common antigen (ECA) synthesis. The polypeptide is UDP-N-acetyl-D-mannosaminuronic acid transferase (Escherichia coli (strain K12)).